The chain runs to 343 residues: N-acetyl-gamma-glutamyl-phosphate reductase (343 aa).

The active site involves Cys149.

This sequence belongs to the NAGSA dehydrogenase family. Type 1 subfamily.

Its subcellular location is the cytoplasm. The catalysed reaction is N-acetyl-L-glutamate 5-semialdehyde + phosphate + NADP(+) = N-acetyl-L-glutamyl 5-phosphate + NADPH + H(+). It functions in the pathway amino-acid biosynthesis; L-arginine biosynthesis; N(2)-acetyl-L-ornithine from L-glutamate: step 3/4. In terms of biological role, catalyzes the NADPH-dependent reduction of N-acetyl-5-glutamyl phosphate to yield N-acetyl-L-glutamate 5-semialdehyde. The sequence is that of N-acetyl-gamma-glutamyl-phosphate reductase from Methanococcus maripaludis (strain C7 / ATCC BAA-1331).